A 135-amino-acid chain; its full sequence is MAQAFQFELVSPERLLLSAQVTEVVIPGSEGYLTALAGHSPLMTTIMPGVVSVKLADGKTDSYVVFGGFADITPQGCTVLAESATHVDDIDPADIQHRIDHARKVLEDASSNEHRTKAEIFLHQLMTLQGAILPA.

This sequence belongs to the ATPase epsilon chain family. F-type ATPases have 2 components, CF(1) - the catalytic core - and CF(0) - the membrane proton channel. CF(1) has five subunits: alpha(3), beta(3), gamma(1), delta(1), epsilon(1). CF(0) has three main subunits: a, b and c.

The protein resides in the cell inner membrane. Functionally, produces ATP from ADP in the presence of a proton gradient across the membrane. This is ATP synthase epsilon chain from Brucella abortus (strain S19).